We begin with the raw amino-acid sequence, 111 residues long: uncharacterized protein (111 aa).

This is an uncharacterized protein from Schizosaccharomyces pombe (strain 972 / ATCC 24843) (Fission yeast).